Here is a 209-residue protein sequence, read N- to C-terminus: Large ribosomal subunit protein uL3 (209 aa).

Q150 bears the N5-methylglutamine mark.

The protein belongs to the universal ribosomal protein uL3 family. In terms of assembly, part of the 50S ribosomal subunit. Forms a cluster with proteins L14 and L19. Post-translationally, methylated by PrmB.

One of the primary rRNA binding proteins, it binds directly near the 3'-end of the 23S rRNA, where it nucleates assembly of the 50S subunit. In Proteus mirabilis (strain HI4320), this protein is Large ribosomal subunit protein uL3.